The following is a 159-amino-acid chain: Small ribosomal subunit protein uS9 (159 aa).

Belongs to the universal ribosomal protein uS9 family.

The polypeptide is Small ribosomal subunit protein uS9 (Rickettsia massiliae (strain Mtu5)).